Here is a 1006-residue protein sequence, read N- to C-terminus: Transcription factor tau subunit sfc4 (1006 aa).

The tract at residues 64 to 91 (GLWSDEESDYEGSDDESNFSKTASRTED) is disordered. Residues 66–80 (WSDEESDYEGSDDES) show a composition bias toward acidic residues. 6 TPR repeats span residues 133–166 (QQML…DNNV), 205–238 (HELW…KPPN), 277–310 (ASIL…FYQY), 396–429 (HLFR…PPDY), 431–464 (WGML…EPAQ), and 466–499 (IGLW…DNSN). A coiled-coil region spans residues 506 to 554 (LAEINELQDNRDAALEIVTNIFEQRRNINELEREQSQNEDHEKNVGSQL). 2 TPR repeats span residues 841 to 874 (PVLV…NPDC) and 924 to 957 (QEAL…SPMS).

Component of the TFIIIC complex including sfc1, sfc3, sfc4, sfc6 and sfc7. The subunits are organized in two globular domains, tauA and tauB, connected by a proteolysis-sensitive and flexible linker. Interacts with sfc1, sfc3 and sfc6. Post-translationally, phosphorylated.

The protein localises to the nucleus. TFIIIC mediates tRNA and 5S RNA gene activation by binding to intragenic promoter elements. Upstream of the transcription start site, TFIIIC assembles the initiation complex TFIIIB-TFIIIC-tDNA, which is sufficient for RNA polymerase III recruitment and function. Part of the tauA domain of TFIIIC that binds boxA DNA promoter sites of tRNA and similar genes. Sfc4 is the TFIIIB assembling subunit of TFIIIC. The sequence is that of Transcription factor tau subunit sfc4 from Schizosaccharomyces pombe (strain 972 / ATCC 24843) (Fission yeast).